A 158-amino-acid polypeptide reads, in one-letter code: Small ribosomal subunit protein uS7 (158 aa).

It belongs to the universal ribosomal protein uS7 family. Part of the 30S ribosomal subunit. Contacts proteins S9 and S11.

In terms of biological role, one of the primary rRNA binding proteins, it binds directly to 16S rRNA where it nucleates assembly of the head domain of the 30S subunit. Is located at the subunit interface close to the decoding center, probably blocks exit of the E-site tRNA. The protein is Small ribosomal subunit protein uS7 of Azobacteroides pseudotrichonymphae genomovar. CFP2.